We begin with the raw amino-acid sequence, 159 residues long: Transcription antitermination protein NusB (159 aa).

The protein belongs to the NusB family.

Functionally, involved in transcription antitermination. Required for transcription of ribosomal RNA (rRNA) genes. Binds specifically to the boxA antiterminator sequence of the ribosomal RNA (rrn) operons. The sequence is that of Transcription antitermination protein NusB from Xanthomonas axonopodis pv. citri (strain 306).